Reading from the N-terminus, the 572-residue chain is Urease subunit alpha (572 aa).

The Urease domain occupies Gly-136–Phe-572. Residues His-141, His-143, and Lys-224 each coordinate Ni(2+). Position 224 is an N6-carboxylysine (Lys-224). His-226 lines the substrate pocket. Ni(2+) contacts are provided by His-253 and His-279. His-327 functions as the Proton donor in the catalytic mechanism. A Ni(2+)-binding site is contributed by Asp-367.

The protein belongs to the metallo-dependent hydrolases superfamily. Urease alpha subunit family. In terms of assembly, heterotrimer of UreA (gamma), UreB (beta) and UreC (alpha) subunits. Three heterotrimers associate to form the active enzyme. Ni cation serves as cofactor. In terms of processing, carboxylation allows a single lysine to coordinate two nickel ions.

Its subcellular location is the cytoplasm. It catalyses the reaction urea + 2 H2O + H(+) = hydrogencarbonate + 2 NH4(+). The protein operates within nitrogen metabolism; urea degradation; CO(2) and NH(3) from urea (urease route): step 1/1. This Actinobacillus pleuropneumoniae serotype 7 (strain AP76) protein is Urease subunit alpha.